We begin with the raw amino-acid sequence, 1637 residues long: Endoribonuclease Dicer homolog 3b (1637 aa).

Residues 1–40 (MADDEAAVLPPPPPLPPPCRPHRQLRPRGSRPTADTTPRT) form a disordered region. The span at 9 to 19 (LPPPPPLPPPC) shows a compositional bias: pro residues. Positions 20–29 (RPHRQLRPRG) are enriched in basic residues. In terms of domain architecture, Helicase ATP-binding spans 46-222 (VFEAALRGNT…LHNCEAHISQ (177 aa)). 59–66 (LDTGSGKT) contacts ATP. A DECH box motif is present at residues 169–172 (DECH). A Helicase C-terminal domain is found at 404 to 556 (SFGSSNEVLC…ALYRHPNALS (153 aa)). Residues 581 to 671 (CVNLIRKYCE…VPLTEEPMDT (91 aa)) enclose the Dicer dsRNA-binding fold domain. The PAZ domain maps to 882–1006 (EIIHLANKSL…VPPELLIHLD (125 aa)). The region spanning 1031–1200 (ASQLRREIGY…LVGAYYVGGG (170 aa)) is the RNase III 1 domain. Mg(2+) contacts are provided by aspartate 1214, aspartate 1309, and serine 1312. The RNase III 2 domain maps to 1241–1389 (IEELEAKLKY…IAGAVFIDTD (149 aa)). 2 DRBM domains span residues 1412–1481 (LALP…DLKQ) and 1545–1629 (GPRS…KLQE).

The protein belongs to the helicase family. Dicer subfamily. As to quaternary structure, may interact with ARGONAUTE1 or PINHEAD through their common PAZ domains. Mg(2+) is required as a cofactor. It depends on Mn(2+) as a cofactor.

The protein localises to the nucleus. Functionally, probably involved in the RNA silencing pathway. May cleave double-stranded RNA to produce short 21-24 nucleotides (nt) RNAs which target the selective destruction of complementary RNAs. This is Endoribonuclease Dicer homolog 3b (DCL3B) from Oryza sativa subsp. japonica (Rice).